The chain runs to 199 residues: Thymidylate kinase (199 aa).

Residue 7–14 (GTEGVGKT) coordinates ATP.

Belongs to the thymidylate kinase family.

It carries out the reaction dTMP + ATP = dTDP + ADP. Phosphorylation of dTMP to form dTDP in both de novo and salvage pathways of dTTP synthesis. The sequence is that of Thymidylate kinase from Acinetobacter baumannii (strain AB307-0294).